The primary structure comprises 148 residues: D-aminoacyl-tRNA deacylase (148 aa).

Residues 137–138 (GP) carry the Gly-cisPro motif, important for rejection of L-amino acids motif.

The protein belongs to the DTD family. In terms of assembly, homodimer.

It is found in the cytoplasm. It carries out the reaction glycyl-tRNA(Ala) + H2O = tRNA(Ala) + glycine + H(+). The catalysed reaction is a D-aminoacyl-tRNA + H2O = a tRNA + a D-alpha-amino acid + H(+). In terms of biological role, an aminoacyl-tRNA editing enzyme that deacylates mischarged D-aminoacyl-tRNAs. Also deacylates mischarged glycyl-tRNA(Ala), protecting cells against glycine mischarging by AlaRS. Acts via tRNA-based rather than protein-based catalysis; rejects L-amino acids rather than detecting D-amino acids in the active site. By recycling D-aminoacyl-tRNA to D-amino acids and free tRNA molecules, this enzyme counteracts the toxicity associated with the formation of D-aminoacyl-tRNA entities in vivo and helps enforce protein L-homochirality. The protein is D-aminoacyl-tRNA deacylase of Latilactobacillus sakei subsp. sakei (strain 23K) (Lactobacillus sakei subsp. sakei).